The primary structure comprises 608 residues: MAQPQPPAYENKNIYATLPRTQRGQPIVLGADPKGKNFLYTNGNSVIIRNIENPAIADVYTEHSCAVNVAKYSPSGFYIASGDASGKIRIWDTVNKEHLLKNEFQPIAGPIKDISWSPDNQRIVAVGEGRERFGHVFMSETGTSVGEISGQSKSINSADFRPARPFRIVTGSEDNTIAVFEGPPFKFKMTKQDHSRFVQAVRYSPDGKFFASAGFDGKVFLYDGTSSELVGEFGSPAHKGGVYALAWKPDSTQLLTCSGDKTCRLWTVESRELVSEFVMGTTVDDQQVSCLWQGDNLITVSLSGVITYLNVADPSKPLRVVKGHNKPITVLGLSDDRSTIYTGSHDGVVTNWNSGSGTNDRITGTGHGNQINGIAAWGDFVYTCGIDDSLRQFSVEGNSYTDYVVKLNCQPRGLAILRNENIIALACIKELTLVQDQKKIFSLPIKYEASSIAVNADTSDVAVGGDDQKLHIYTLKGGVLEPKVELDHLGAVTDVSYSPDLKYLVACDAHRKVVLYSVEEYKPAHNKEWGFHSARVNTVAWSPNSLLVASGSLDTTIIIWSVANPAKHTIIKNAHPQSQITRLVWLDNNTVISTGQDCNTKVWHVENI.

11 WD repeats span residues 62 to 101 (EHSC…HLLK), 106 to 149 (PIAG…GEIS), 150 to 190 (GQSK…FKMT), 193 to 232 (DHSR…LVGE), 237 to 276 (AHKG…LVSE), 323 to 362 (GHNK…NDRI), 366 to 403 (GHGN…YTDY), 444 to 483 (PIKY…LEPK), 487 to 526 (DHLG…PAHN), 531 to 570 (FHSA…KHTI), and 575 to 607 (HPQS…HVEN).

It belongs to the WD repeat AIP1 family. Expressed in pupal wing cells.

The protein localises to the cytoplasm. The protein resides in the cytoskeleton. Induces disassembly of actin filaments in conjunction with ADF/cofilin family proteins. Together with GMF, promotes Arp2/3-nucleated actin filament array disassembly. Essential for organismal and cell viability. Required for the development of normal wing cell planar polarity. In egg chambers and together with GMF, plays an important role in directional migration of border cell clusters. This Drosophila melanogaster (Fruit fly) protein is Actin-interacting protein 1 (flr).